We begin with the raw amino-acid sequence, 689 residues long: Glycine--tRNA ligase beta subunit (689 aa).

The protein belongs to the class-II aminoacyl-tRNA synthetase family. As to quaternary structure, tetramer of two alpha and two beta subunits.

It localises to the cytoplasm. The catalysed reaction is tRNA(Gly) + glycine + ATP = glycyl-tRNA(Gly) + AMP + diphosphate. The polypeptide is Glycine--tRNA ligase beta subunit (Dictyoglomus thermophilum (strain ATCC 35947 / DSM 3960 / H-6-12)).